A 182-amino-acid polypeptide reads, in one-letter code: ADP-ribosylation factor-like protein 3 (182 aa).

Glycine 2 carries the N-myristoyl glycine lipid modification. Serine 5 carries the phosphoserine modification. Residues 24 to 31, threonine 48, 67 to 71, glycine 70, 126 to 129, and 159 to 161 contribute to the GTP site; these read GLDNAGKT, DIGGQ, NKQD, and SAL. Residues threonine 31 and threonine 48 each coordinate Mg(2+).

Belongs to the small GTPase superfamily. Arf family. In terms of assembly, found in a complex with ARL3, RP2 and UNC119 (or UNC119B); RP2 induces hydrolysis of GTP ARL3 in the complex, leading to the release of UNC119 (or UNC119B). Interacts with RP2; interaction is direct and stimulated with the activated GTP-bound form of ARL3. Interacts with SYS1. Interacts with ARL2BP; the GTP-bound form interacts with ARL2BP. Microtubule-associated protein. Does not interact with TBCC. Interacts with RP2. Interacts with PDE6D; the interaction occurs specifically with the GTP-bound form of ARL3. Interacts with GGA1; the interaction recruits PKD1:PKD2 complex to trans-Golgi network and is required for ciliary targeting of PKD1:PKD2 complex. Interacts with DNAAF9.

It localises to the golgi apparatus membrane. The protein localises to the cytoplasm. It is found in the cytoskeleton. The protein resides in the spindle. Its subcellular location is the nucleus. It localises to the microtubule organizing center. The protein localises to the centrosome. It is found in the cell projection. The protein resides in the cilium. Its function is as follows. Small GTP-binding protein which cycles between an inactive GDP-bound and an active GTP-bound form, and the rate of cycling is regulated by guanine nucleotide exchange factors (GEF) and GTPase-activating proteins (GAP). Required for normal cytokinesis and cilia signaling. Required for targeting proteins to the cilium, including myristoylated NPHP3 and prenylated INPP5E. Targets NPHP3 to the ciliary membrane by releasing myristoylated NPHP3 from UNC119B cargo adapter into the cilium. Requires assistance from GTPase-activating proteins (GAPs) like RP2 and PDE6D, in order to cycle between inactive GDP-bound and active GTP-bound forms. Required for PKD1:PKD2 complex targeting from the trans-Golgi network to the cilium. The polypeptide is ADP-ribosylation factor-like protein 3 (Mus musculus (Mouse)).